The primary structure comprises 87 residues: Large ribosomal subunit protein bL27 (87 aa).

The segment at 1–26 (MAHKKGTGSTRNGRDSNSKRLGVKAY) is disordered.

This sequence belongs to the bacterial ribosomal protein bL27 family.

The chain is Large ribosomal subunit protein bL27 from Prochlorococcus marinus (strain SARG / CCMP1375 / SS120).